Reading from the N-terminus, the 73-residue chain is Small ribosomal subunit protein bS18 (73 aa).

The protein belongs to the bacterial ribosomal protein bS18 family. In terms of assembly, part of the 30S ribosomal subunit. Forms a tight heterodimer with protein bS6.

Binds as a heterodimer with protein bS6 to the central domain of the 16S rRNA, where it helps stabilize the platform of the 30S subunit. The sequence is that of Small ribosomal subunit protein bS18 from Prochlorococcus marinus (strain SARG / CCMP1375 / SS120).